The chain runs to 217 residues: Aminopyrimidine aminohydrolase (217 aa).

Position 44 (Asp-44) interacts with substrate. The active-site Nucleophile is the Cys-135. Tyr-139 and Tyr-165 together coordinate substrate. Glu-207 functions as the Proton donor in the catalytic mechanism.

It belongs to the TenA family. Homotetramer.

The enzyme catalyses 4-amino-5-aminomethyl-2-methylpyrimidine + H2O = 4-amino-5-hydroxymethyl-2-methylpyrimidine + NH4(+). Its pathway is cofactor biosynthesis; thiamine diphosphate biosynthesis. In terms of biological role, catalyzes an amino-pyrimidine hydrolysis reaction at the C5' of the pyrimidine moiety of thiamine compounds to give a hydroxymethylpyrimidine (HMP). Displays low activity on 4-amino-5-aminomethyl-2-methylpyrimidine as substrate, indicating that the enzyme may act on a different HMP precursor that may derive from the human stomach food assumption or processing. Is probably involved in thiamine biosynthesis. Does not display thiaminase II activity, as it is unable to hydrolyze thiamine. The chain is Aminopyrimidine aminohydrolase from Helicobacter pylori (Campylobacter pylori).